Here is a 440-residue protein sequence, read N- to C-terminus: 3-phosphoshikimate 1-carboxyvinyltransferase (440 aa).

3 residues coordinate 3-phosphoshikimate: Lys-25, Ser-26, and Arg-30. Lys-25 provides a ligand contact to phosphoenolpyruvate. 2 residues coordinate phosphoenolpyruvate: Gly-96 and Arg-124. 3-phosphoshikimate-binding residues include Ser-168, Gln-169, Asp-310, and Lys-337. A phosphoenolpyruvate-binding site is contributed by Gln-169. Asp-310 acts as the Proton acceptor in catalysis. Phosphoenolpyruvate contacts are provided by Arg-341, Arg-382, and Lys-409.

It belongs to the EPSP synthase family. As to quaternary structure, monomer.

It localises to the cytoplasm. The enzyme catalyses 3-phosphoshikimate + phosphoenolpyruvate = 5-O-(1-carboxyvinyl)-3-phosphoshikimate + phosphate. It functions in the pathway metabolic intermediate biosynthesis; chorismate biosynthesis; chorismate from D-erythrose 4-phosphate and phosphoenolpyruvate: step 6/7. In terms of biological role, catalyzes the transfer of the enolpyruvyl moiety of phosphoenolpyruvate (PEP) to the 5-hydroxyl of shikimate-3-phosphate (S3P) to produce enolpyruvyl shikimate-3-phosphate and inorganic phosphate. This Chlamydia trachomatis serovar D (strain ATCC VR-885 / DSM 19411 / UW-3/Cx) protein is 3-phosphoshikimate 1-carboxyvinyltransferase.